The primary structure comprises 350 residues: tRNA uridine(34) hydroxylase (350 aa).

Residues 146–240 (DDPDALFIDM…YARKAREQGL (95 aa)) enclose the Rhodanese domain. The active-site Cysteine persulfide intermediate is the cysteine 200.

The protein belongs to the TrhO family.

It carries out the reaction uridine(34) in tRNA + AH2 + O2 = 5-hydroxyuridine(34) in tRNA + A + H2O. Functionally, catalyzes oxygen-dependent 5-hydroxyuridine (ho5U) modification at position 34 in tRNAs. The chain is tRNA uridine(34) hydroxylase from Shigella sonnei (strain Ss046).